The sequence spans 406 residues: Tyrosine-protein phosphatase non-receptor type 2 (406 aa).

The Tyrosine-protein phosphatase domain maps to 5 to 275; it reads IEREFEELDA…RFSYMAIIEG (271 aa). Tyr-22 is subject to Phosphotyrosine. Position 52 is a phosphoserine (Ser-52). At Tyr-68 the chain carries Phosphotyrosine. Substrate-binding positions include Asp-182, 216 to 222, and Gln-260; that span reads CSAGIGR. Residue Cys-216 is the Phosphocysteine intermediate of the active site. At Cys-216 the chain carries S-nitrosocysteine. Phosphoserine is present on residues Ser-293, Ser-298, Ser-304, Ser-320, and Ser-339. The interval 341-406 is endoplasmic reticulum location; the sequence is ESILRKRIRE…ALVGWTLLFH (66 aa). Residues 371–406 are mediates interaction with STX17; that stretch reads ERKRKRWLYWQPILTKMGFVSVILVGALVGWTLLFH.

Belongs to the protein-tyrosine phosphatase family. Non-receptor class 1 subfamily. In terms of assembly, interacts with RMDN3. Isoform 1 interacts with TMED9. Isoform 1 interacts with STX17; dephosphorylates STX17. Interacts with ITGA1 (via cytoplasmic domain); activates the phosphatase activity towards EGFR. Interacts with TRAF2; probably involved in tumor necrosis factor-mediated signaling. Interacts with MET. Interacts with FAM220A and STAT3; interaction with FAM220A promotes interaction of PTPN2 with transcriptional activator STAT3, leading to dephosphorylation of STAT3 by PTPN2 and negative regulation of STAT3 transcriptional activator activity. Specifically phosphorylated in a cell cycle-dependent manner by cyclin-dependent kinases CDK1 and CDK2. Probably activated through phosphorylation by PKR. As to expression, ubiquitously expressed. The highest expression levels were found in ovary, testis, thymus and kidney.

The protein localises to the endoplasmic reticulum. Its subcellular location is the endoplasmic reticulum-Golgi intermediate compartment. It is found in the nucleus. It localises to the cytoplasm. The protein resides in the cell membrane. It carries out the reaction O-phospho-L-tyrosyl-[protein] + H2O = L-tyrosyl-[protein] + phosphate. In terms of biological role, non-receptor type tyrosine-specific phosphatase that dephosphorylates receptor protein tyrosine kinases including INSR, EGFR, CSF1R, PDGFR. Also dephosphorylates non-receptor protein tyrosine kinases like JAK1, JAK2, JAK3, Src family kinases, STAT1, STAT3 and STAT6 either in the nucleus or the cytoplasm. Negatively regulates numerous signaling pathways and biological processes like hematopoiesis, inflammatory response, cell proliferation and differentiation, and glucose homeostasis. Plays a multifaceted and important role in the development of the immune system. Functions in T-cell receptor signaling through dephosphorylation of FYN and LCK to control T-cells differentiation and activation. Dephosphorylates CSF1R, negatively regulating its downstream signaling and macrophage differentiation. Negatively regulates cytokine (IL2/interleukin-2 and interferon)-mediated signaling through dephosphorylation of the cytoplasmic kinases JAK1, JAK3 and their substrate STAT1, that propagate signaling downstream of the cytokine receptors. Also regulates the IL6/interleukin-6 and IL4/interleukin-4 cytokine signaling through dephosphorylation of STAT3 and STAT6 respectively. In addition to the immune system, it is involved in anchorage-dependent, negative regulation of EGF-stimulated cell growth. Activated by the integrin ITGA1/ITGB1, it dephosphorylates EGFR and negatively regulates EGF signaling. Dephosphorylates PDGFRB and negatively regulates platelet-derived growth factor receptor-beta signaling pathway and therefore cell proliferation. Negatively regulates tumor necrosis factor-mediated signaling downstream via MAPK through SRC dephosphorylation. May also regulate the hepatocyte growth factor receptor signaling pathway through dephosphorylation of the hepatocyte growth factor receptor MET. Also plays an important role in glucose homeostasis. For instance, negatively regulates the insulin receptor signaling pathway through the dephosphorylation of INSR and control gluconeogenesis and liver glucose production through negative regulation of the IL6 signaling pathways. May also bind DNA. The polypeptide is Tyrosine-protein phosphatase non-receptor type 2 (Ptpn2) (Mus musculus (Mouse)).